Here is a 232-residue protein sequence, read N- to C-terminus: Orotidine 5'-phosphate decarboxylase (232 aa).

Residues Asp13, Lys35, 62–71 (DLKFHDIPNT), Thr122, Arg182, Gln191, Gly211, and Arg212 each bind substrate. Lys64 acts as the Proton donor in catalysis.

Belongs to the OMP decarboxylase family. Type 1 subfamily. In terms of assembly, homodimer.

It catalyses the reaction orotidine 5'-phosphate + H(+) = UMP + CO2. Its pathway is pyrimidine metabolism; UMP biosynthesis via de novo pathway; UMP from orotate: step 2/2. In terms of biological role, catalyzes the decarboxylation of orotidine 5'-monophosphate (OMP) to uridine 5'-monophosphate (UMP). The polypeptide is Orotidine 5'-phosphate decarboxylase (Pseudomonas syringae pv. tomato (strain ATCC BAA-871 / DC3000)).